The chain runs to 322 residues: SUMO-activating enzyme subunit 1A (322 aa).

N-acetylmethionine is present on M1.

Belongs to the ubiquitin-activating E1 family. Heterodimer of SAE1A or SAE1B and SAE2. The complex binds SUMO proteins via SAE2.

Its subcellular location is the nucleus. Its pathway is protein modification; protein sumoylation. The dimeric enzyme acts as an E1 ligase for SUMO1 and SUMO2. It mediates ATP-dependent activation of SUMO proteins and formation of a thioester with a conserved cysteine residue on SAE2. Functionally redundant with its paralog SAE1B. This Arabidopsis thaliana (Mouse-ear cress) protein is SUMO-activating enzyme subunit 1A (SAE1A).